A 410-amino-acid polypeptide reads, in one-letter code: Gamma-glutamyl phosphate reductase (410 aa).

It belongs to the gamma-glutamyl phosphate reductase family.

It is found in the cytoplasm. The catalysed reaction is L-glutamate 5-semialdehyde + phosphate + NADP(+) = L-glutamyl 5-phosphate + NADPH + H(+). It participates in amino-acid biosynthesis; L-proline biosynthesis; L-glutamate 5-semialdehyde from L-glutamate: step 2/2. Its function is as follows. Catalyzes the NADPH-dependent reduction of L-glutamate 5-phosphate into L-glutamate 5-semialdehyde and phosphate. The product spontaneously undergoes cyclization to form 1-pyrroline-5-carboxylate. The protein is Gamma-glutamyl phosphate reductase of Sulfurimonas denitrificans (strain ATCC 33889 / DSM 1251) (Thiomicrospira denitrificans (strain ATCC 33889 / DSM 1251)).